A 1187-amino-acid polypeptide reads, in one-letter code: DNA-directed RNA polymerase subunit beta (1187 aa).

This sequence belongs to the RNA polymerase beta chain family. As to quaternary structure, the RNAP catalytic core consists of 2 alpha, 1 beta, 1 beta' and 1 omega subunit. When a sigma factor is associated with the core the holoenzyme is formed, which can initiate transcription.

It carries out the reaction RNA(n) + a ribonucleoside 5'-triphosphate = RNA(n+1) + diphosphate. In terms of biological role, DNA-dependent RNA polymerase catalyzes the transcription of DNA into RNA using the four ribonucleoside triphosphates as substrates. This is DNA-directed RNA polymerase subunit beta from Petrotoga mobilis (strain DSM 10674 / SJ95).